A 329-amino-acid chain; its full sequence is Isopenicillin N synthase (329 aa).

Residues arginine 87, tyrosine 91, serine 183, and tyrosine 189 each contribute to the isopenicillin N site. Arginine 87, tyrosine 91, serine 183, tyrosine 189, histidine 212, and aspartate 214 together coordinate N-[(5S)-5-amino-5-carboxypentanoyl]-L-cysteinyl-D-valine. Positions 180–286 constitute a Fe2OG dioxygenase domain; sequence TLSSVSLIRY…RLSLPFFLNA (107 aa). Residues histidine 212, aspartate 214, and histidine 268 each coordinate Fe(2+). Arginine 277 is a 2-oxoglutarate binding site. Residue serine 279 participates in isopenicillin N binding. Serine 279 contacts N-[(5S)-5-amino-5-carboxypentanoyl]-L-cysteinyl-D-valine.

This sequence belongs to the iron/ascorbate-dependent oxidoreductase family. It depends on Fe cation as a cofactor. Requires L-ascorbate as cofactor.

The enzyme catalyses N-[(5S)-5-amino-5-carboxypentanoyl]-L-cysteinyl-D-valine + O2 = isopenicillin N + 2 H2O. It participates in antibiotic biosynthesis; penicillin G biosynthesis; penicillin G from L-alpha-aminoadipate and L-cysteine and L-valine: step 2/3. Removes, in the presence of oxygen, 4 hydrogen atoms from delta-L-(alpha-aminoadipyl)-L-cysteinyl-D-valine (ACV) to form the azetidinone and thiazolidine rings of isopenicillin. The sequence is that of Isopenicillin N synthase (pcbC) from Streptomyces jumonjinensis.